The primary structure comprises 362 residues: Acyl-CoA-binding domain-containing protein 3 (362 aa).

A signal peptide spans 1–22; it reads MEVFLEMLLTAVVALLFSFLLA. 2 disordered regions span residues 132 to 151 and 193 to 214; these read QDEQ…SPEN and VEKS…EKTE. A coiled-coil region spans residues 192 to 221; the sequence is RVEKSSNMVEESDAEAENEEKTELTIEEDD. An ACB domain is found at 231–318; the sequence is LEKAFAAAVN…VSKEIPGLTK (88 aa). An acyl-CoA-binding positions include 260 to 264, lysine 286, and tyrosine 305; that span reads FGLHK. Residues 329-362 form a disordered region; sequence METSVGLPPNSGSLEDPTNLVTTGVDESSKNGIP.

This sequence belongs to the ACBP family. In terms of tissue distribution, expressed in roots, stems, leaves, flowers and siliques.

Its subcellular location is the secreted. It is found in the extracellular space. Functionally, binds medium- and long-chain acyl-CoA esters with very high affinity. Can interact in vitro with arachidonyl-CoA, barely with oleoyl-CoA, but not with palmitoyl-CoA. The sequence is that of Acyl-CoA-binding domain-containing protein 3 (ACBP3) from Arabidopsis thaliana (Mouse-ear cress).